Reading from the N-terminus, the 188-residue chain is Probable nicotinate-nucleotide adenylyltransferase (188 aa).

Belongs to the NadD family.

The enzyme catalyses nicotinate beta-D-ribonucleotide + ATP + H(+) = deamido-NAD(+) + diphosphate. The protein operates within cofactor biosynthesis; NAD(+) biosynthesis; deamido-NAD(+) from nicotinate D-ribonucleotide: step 1/1. Functionally, catalyzes the reversible adenylation of nicotinate mononucleotide (NaMN) to nicotinic acid adenine dinucleotide (NaAD). The protein is Probable nicotinate-nucleotide adenylyltransferase of Rhizobium meliloti (strain 1021) (Ensifer meliloti).